An 81-amino-acid polypeptide reads, in one-letter code: RNA-binding protein Hfq (81 aa).

Residues Asp-9–Ile-68 form the Sm domain.

It belongs to the Hfq family. Homohexamer.

Its function is as follows. RNA chaperone that binds small regulatory RNA (sRNAs) and mRNAs to facilitate mRNA translational regulation in response to envelope stress, environmental stress and changes in metabolite concentrations. Also binds with high specificity to tRNAs. This Marinomonas sp. (strain MWYL1) protein is RNA-binding protein Hfq.